A 185-amino-acid polypeptide reads, in one-letter code: UPF0301 protein Tbd_2579 (185 aa).

The protein belongs to the UPF0301 (AlgH) family.

The protein is UPF0301 protein Tbd_2579 of Thiobacillus denitrificans (strain ATCC 25259 / T1).